We begin with the raw amino-acid sequence, 376 residues long: D-alanine--D-alanine ligase (376 aa).

One can recognise an ATP-grasp domain in the interval 150 to 358; that stretch reads KIIFEKEGLP…YSELINKLIE (209 aa). 183–238 provides a ligand contact to ATP; the sequence is EGRLTYPCFVKPSNAGSSVGVNKASDRESLVKALNIAAKNDRRILVEEFINGREIE. Residues aspartate 311, glutamate 325, and asparagine 327 each contribute to the Mg(2+) site.

It belongs to the D-alanine--D-alanine ligase family. The cofactor is Mg(2+). It depends on Mn(2+) as a cofactor.

The protein resides in the cytoplasm. It catalyses the reaction 2 D-alanine + ATP = D-alanyl-D-alanine + ADP + phosphate + H(+). It functions in the pathway cell wall biogenesis; peptidoglycan biosynthesis. In terms of biological role, cell wall formation. This chain is D-alanine--D-alanine ligase, found in Ruminiclostridium cellulolyticum (strain ATCC 35319 / DSM 5812 / JCM 6584 / H10) (Clostridium cellulolyticum).